A 289-amino-acid chain; its full sequence is Eukaryotic translation initiation factor 3 subunit G (289 aa).

2 disordered regions span residues 1–31 and 151–199; these read MSRLANSAGDWADDEEFDEAASLPPQQVISN and DTMA…GEKM. In terms of domain architecture, RRM spans 209 to 287; sequence ATLRVTNVSE…LILRVEFAKK (79 aa).

It belongs to the eIF-3 subunit G family. Component of the eukaryotic translation initiation factor 3 (eIF-3) complex.

It localises to the cytoplasm. Its function is as follows. RNA-binding component of the eukaryotic translation initiation factor 3 (eIF-3) complex, which is involved in protein synthesis of a specialized repertoire of mRNAs and, together with other initiation factors, stimulates binding of mRNA and methionyl-tRNAi to the 40S ribosome. The eIF-3 complex specifically targets and initiates translation of a subset of mRNAs involved in cell proliferation. This subunit can bind 18S rRNA. The chain is Eukaryotic translation initiation factor 3 subunit G from Coccidioides immitis (strain RS) (Valley fever fungus).